The chain runs to 176 residues: 3-hydroxyanthranilate 3,4-dioxygenase (176 aa).

Arginine 44 contacts O2. 3 residues coordinate Fe cation: histidine 48, glutamate 54, and histidine 92. Substrate is bound at residue glutamate 54. Residues arginine 96 and glutamate 106 each contribute to the substrate site. Residues cysteine 121, cysteine 124, cysteine 158, and cysteine 161 each coordinate Fe cation.

Belongs to the 3-HAO family. Homodimer. It depends on Fe(2+) as a cofactor.

It carries out the reaction 3-hydroxyanthranilate + O2 = (2Z,4Z)-2-amino-3-carboxymuconate 6-semialdehyde. Its pathway is cofactor biosynthesis; NAD(+) biosynthesis; quinolinate from L-kynurenine: step 3/3. Catalyzes the oxidative ring opening of 3-hydroxyanthranilate to 2-amino-3-carboxymuconate semialdehyde, which spontaneously cyclizes to quinolinate. The polypeptide is 3-hydroxyanthranilate 3,4-dioxygenase (Xanthomonas euvesicatoria pv. vesicatoria (strain 85-10) (Xanthomonas campestris pv. vesicatoria)).